Consider the following 147-residue polypeptide: Large ribosomal subunit protein uL13 (147 aa).

Belongs to the universal ribosomal protein uL13 family. Part of the 50S ribosomal subunit.

In terms of biological role, this protein is one of the early assembly proteins of the 50S ribosomal subunit, although it is not seen to bind rRNA by itself. It is important during the early stages of 50S assembly. This chain is Large ribosomal subunit protein uL13, found in Renibacterium salmoninarum (strain ATCC 33209 / DSM 20767 / JCM 11484 / NBRC 15589 / NCIMB 2235).